Reading from the N-terminus, the 508-residue chain is MALKLMIQGTASSVGKSLIVTALCRIFKQDGLKVAPFKSQNMALNSYITEEGLEIGRAQAVQAEAAGIKPSYHMNPILLKPSSDKKSQVVLRGRVYENMSAEEYFKFRPKLLELIKEDFDFLAKRNDVVVIEGAGSPAEINLKEKDIVNMGLAELVNAPVLLVGDIDRGGVFASIAGTMLLLDEKERNRVEGVIINKFRGDIEILKPGLKMLENIIQKEVLGVIPYMDVHIDEEDGATDRFYTKCAQGEVDVAIINLPHISNFTDFDPLTKVPGVKIKYVNKGERIGDCDVLIIPGTKNTIGDLKVLKDYGLDKEILNLREKGKFIVGICGGFQMLGKVIKDPYHIESDTEEMEGLGLLSIETVIEREKTTSETKAFLGEELPDTLSSLKGLFVTGYEIHMGESYILGKGKHFSIVVERNKEKVKVLDGAVSEDGRVFGTYIHGIFENSLFTKEFINIVRKEKGLTPLEEVINYREFREKEYDRLANIVRNSLDMERIYQIMERYRDK.

A GATase cobBQ-type domain is found at 249–451 (EVDVAIINLP…IHGIFENSLF (203 aa)). Catalysis depends on cysteine 330, which acts as the Nucleophile. Histidine 443 is a catalytic residue.

It belongs to the CobB/CobQ family. CobQ subfamily.

It participates in cofactor biosynthesis; adenosylcobalamin biosynthesis. Functionally, catalyzes amidations at positions B, D, E, and G on adenosylcobyrinic A,C-diamide. NH(2) groups are provided by glutamine, and one molecule of ATP is hydrogenolyzed for each amidation. In Caldanaerobacter subterraneus subsp. tengcongensis (strain DSM 15242 / JCM 11007 / NBRC 100824 / MB4) (Thermoanaerobacter tengcongensis), this protein is Cobyric acid synthase.